The following is a 460-amino-acid chain: Serine incorporator 5 (460 aa).

The Extracellular portion of the chain corresponds to 1–36; it reads MCTPCCVSQLACCCGSAACSLCCGCCPKIKQSTSTR. A helical membrane pass occupies residues 37-57; that stretch reads FMYALFFMLVTVTCVIMMSPT. The Cytoplasmic segment spans residues 58-89; sequence VEMAMREHIPFYSQMCQQLNAGENCSTLVGYS. The helical transmembrane segment at 90-110 threads the bilayer; the sequence is AVYKVCFGMACFFFFFAVFTI. Residues 111 to 124 are Extracellular-facing; the sequence is RVQNSTGCRAAVHN. Asn114 is a glycosylation site (N-linked (GlcNAc...) asparagine). A helical membrane pass occupies residues 125–145; sequence GFWFFKFVALLACCAGGFFLP. Topologically, residues 146-156 are cytoplasmic; the sequence is NQDQFLEVWRY. A helical transmembrane segment spans residues 157–177; sequence VGAAGGFLFIIIQLMLLVQFA. Over 178-197 the chain is Extracellular; the sequence is HRWNQNWSSGATYNKLWYAA. Residue Asn183 is glycosylated (N-linked (GlcNAc...) asparagine). Residues 198 to 218 form a helical membrane-spanning segment; sequence LALVTLVLFSVAVGGMVFMFM. Residues 219-230 are Cytoplasmic-facing; sequence YYTHPEACFLNK. The helical transmembrane segment at 231 to 251 threads the bilayer; the sequence is IFLGVNGGLCFIVSLLAISPC. The Extracellular segment spans residues 252 to 259; sequence IQTFQPTS. The chain crosses the membrane as a helical span at residues 260–280; sequence GLLQPAVITLYVMYLTFSALA. The Cytoplasmic segment spans residues 281-311; sequence SKPIEMVEDEIKGNITVCVFPFKSGLKSDTN. A helical membrane pass occupies residues 312–332; it reads IVTGVGTAILFCCILYSCLIS. Over 333 to 391 the chain is Extracellular; that stretch reads TTKRSSAALQVYRNDMPENERARCCFCWVDDTEDYDDEKTSGGQNVKYDERDGTVYSYC. The chain crosses the membrane as a helical span at residues 392–412; the sequence is FFHFVFFLGSLYVMMTVTNWF. The Cytoplasmic segment spans residues 413 to 433; sequence HYDNAKIERLLEGSWSVFWIK. Residues 434 to 454 form a helical membrane-spanning segment; that stretch reads MASSWVCLFFYMWTLVVPMLF. The Extracellular portion of the chain corresponds to 455–460; that stretch reads PQRFQA.

Belongs to the TDE1 family.

It is found in the cell membrane. It carries out the reaction a 1,2-diacyl-sn-glycero-3-phospho-L-serine(in) = a 1,2-diacyl-sn-glycero-3-phospho-L-serine(out). The catalysed reaction is a 1,2-diacyl-sn-glycero-3-phosphocholine(in) = a 1,2-diacyl-sn-glycero-3-phosphocholine(out). It catalyses the reaction a 1,2-diacyl-sn-glycero-3-phosphoethanolamine(in) = a 1,2-diacyl-sn-glycero-3-phosphoethanolamine(out). Its function is as follows. Restriction factor required to restrict infectivity of gammaretroviruses: acts by inhibiting an early step of viral infection. Impairs the penetration of the viral particle into the cytoplasm. Non-ATP-dependent, non-specific lipid transporter for phosphatidylserine, phosphatidylcholine, and phosphatidylethanolamine. Functions as a scramblase that flips lipids in both directions across the membrane. Phospholipid scrambling results in gammaretroviral surface exposure of phosphatidylserine and loss of membrane asymmetry, which leads to loss of infectivity. Enhances the incorporation of serine into phosphatidylserine and sphingolipids. The sequence is that of Serine incorporator 5 (serinc5) from Danio rerio (Zebrafish).